A 65-amino-acid polypeptide reads, in one-letter code: Large ribosomal subunit protein bL35 (65 aa).

The protein belongs to the bacterial ribosomal protein bL35 family.

The chain is Large ribosomal subunit protein bL35 from Porphyromonas gingivalis (strain ATCC 33277 / DSM 20709 / CIP 103683 / JCM 12257 / NCTC 11834 / 2561).